A 224-amino-acid polypeptide reads, in one-letter code: UPF0111 protein TC_0063 (224 aa).

Belongs to the UPF0111 family.

The chain is UPF0111 protein TC_0063 from Chlamydia muridarum (strain MoPn / Nigg).